The sequence spans 603 residues: Aspartate--tRNA(Asp/Asn) ligase (603 aa).

An aspartate region spans residues 205–208; the sequence is QLFK. Arg-227 serves as a coordination point for L-aspartate. Residues 227–229 and Gln-236 contribute to the ATP site; that span reads RDE. His-463 lines the L-aspartate pocket. Glu-497 contributes to the ATP binding site. Arg-504 lines the L-aspartate pocket. 549-552 is a binding site for ATP; it reads GMDR.

This sequence belongs to the class-II aminoacyl-tRNA synthetase family. Type 1 subfamily. Homodimer.

The protein resides in the cytoplasm. It carries out the reaction tRNA(Asx) + L-aspartate + ATP = L-aspartyl-tRNA(Asx) + AMP + diphosphate. Aspartyl-tRNA synthetase with relaxed tRNA specificity since it is able to aspartylate not only its cognate tRNA(Asp) but also tRNA(Asn). Reaction proceeds in two steps: L-aspartate is first activated by ATP to form Asp-AMP and then transferred to the acceptor end of tRNA(Asp/Asn). The sequence is that of Aspartate--tRNA(Asp/Asn) ligase from Anaeromyxobacter sp. (strain K).